We begin with the raw amino-acid sequence, 180 residues long: Acireductone dioxygenase (180 aa).

His-99, His-101, Glu-105, and His-145 together coordinate Fe(2+). Residues His-99, His-101, Glu-105, and His-145 each coordinate Ni(2+).

The protein belongs to the acireductone dioxygenase (ARD) family. In terms of assembly, monomer. Requires Fe(2+) as cofactor. Ni(2+) is required as a cofactor.

The catalysed reaction is 1,2-dihydroxy-5-(methylsulfanyl)pent-1-en-3-one + O2 = 3-(methylsulfanyl)propanoate + CO + formate + 2 H(+). It carries out the reaction 1,2-dihydroxy-5-(methylsulfanyl)pent-1-en-3-one + O2 = 4-methylsulfanyl-2-oxobutanoate + formate + 2 H(+). The protein operates within amino-acid biosynthesis; L-methionine biosynthesis via salvage pathway; L-methionine from S-methyl-5-thio-alpha-D-ribose 1-phosphate: step 5/6. In terms of biological role, catalyzes 2 different reactions between oxygen and the acireductone 1,2-dihydroxy-3-keto-5-methylthiopentene (DHK-MTPene) depending upon the metal bound in the active site. Fe-containing acireductone dioxygenase (Fe-ARD) produces formate and 2-keto-4-methylthiobutyrate (KMTB), the alpha-ketoacid precursor of methionine in the methionine recycle pathway. Ni-containing acireductone dioxygenase (Ni-ARD) produces methylthiopropionate, carbon monoxide and formate, and does not lie on the methionine recycle pathway. This chain is Acireductone dioxygenase, found in Geobacillus kaustophilus (strain HTA426).